A 275-amino-acid chain; its full sequence is uncharacterized protein (275 aa).

2 disordered regions span residues Met1 to Gln25 and Gln185 to Met275. Over residues Lys228–Asp239 the composition is skewed to basic and acidic residues.

This is an uncharacterized protein from Neurospora crassa (strain ATCC 24698 / 74-OR23-1A / CBS 708.71 / DSM 1257 / FGSC 987).